Reading from the N-terminus, the 226-residue chain is Guanylate kinase (226 aa).

The Guanylate kinase-like domain maps to 13–193; it reads GLLLVLSAPS…ALAQLQAIVR (181 aa). Position 20–27 (20–27) interacts with ATP; it reads APSGAGKT.

Belongs to the guanylate kinase family.

The protein resides in the cytoplasm. It catalyses the reaction GMP + ATP = GDP + ADP. Essential for recycling GMP and indirectly, cGMP. The protein is Guanylate kinase of Anaeromyxobacter dehalogenans (strain 2CP-C).